The sequence spans 306 residues: ATP-dependent (S)-NAD(P)H-hydrate dehydratase (306 aa).

Residues 4-300 form the YjeF C-terminal domain; sequence LIDLFKPMIP…NQISNGFEDL (297 aa). (6S)-NADPHX is bound by residues Gly-104 and 157–163; that span reads NFVEFKS. ATP-binding positions include 197-201 and 216-225; these read KGKED and GMPRRCGGQG. Asp-226 lines the (6S)-NADPHX pocket.

This sequence belongs to the NnrD/CARKD family. Mg(2+) is required as a cofactor.

It catalyses the reaction (6S)-NADHX + ATP = ADP + phosphate + NADH + H(+). It carries out the reaction (6S)-NADPHX + ATP = ADP + phosphate + NADPH + H(+). Catalyzes the dehydration of the S-form of NAD(P)HX at the expense of ATP, which is converted to ADP. Together with NAD(P)HX epimerase, which catalyzes the epimerization of the S- and R-forms, the enzyme allows the repair of both epimers of NAD(P)HX, a damaged form of NAD(P)H that is a result of enzymatic or heat-dependent hydration. The sequence is that of ATP-dependent (S)-NAD(P)H-hydrate dehydratase from Dictyostelium discoideum (Social amoeba).